Reading from the N-terminus, the 517-residue chain is DNA-(apurinic or apyrimidinic site) endonuclease 2 (517 aa).

Mg(2+)-binding residues include asparagine 9 and glutamate 34. The short motif at glutamate 82–cysteine 90 is the Claspin-like CKB motif element. Tyrosine 142 is a catalytic residue. The Mg(2+) site is built by aspartate 183, asparagine 185, aspartate 299, and histidine 300. Catalysis depends on aspartate 183, which acts as the Proton donor/acceptor. Histidine 300 serves as the catalytic Proton acceptor. Positions glycine 347–phenylalanine 362 are enriched in polar residues. Positions glycine 347–alanine 366 are disordered. The PCNA interacting protein (PIP) box motif lies at glutamine 395–phenylalanine 402. 4 residues coordinate Zn(2+): cysteine 463, histidine 466, cysteine 489, and cysteine 503. Residues cysteine 463 to lysine 512 form a GRF-type zinc finger.

This sequence belongs to the DNA repair enzymes AP/ExoA family. As to quaternary structure, interacts (via PIP box and GRF-type Zinc finger domain) with pcna; the interaction is required for 3 -5 SSB end resection, assembly of a checkpoint protein complex to SSB sites, and SSB signaling. Interacts with chek1. The cofactor is Mg(2+). Requires Mn(2+) as cofactor. As to expression, expressed in eggs (at protein level).

The protein localises to the nucleus. It is found in the chromosome. Its subcellular location is the cytoplasm. The protein resides in the mitochondrion. It catalyses the reaction Exonucleolytic cleavage in the 3'- to 5'-direction to yield nucleoside 5'-phosphates.. Its activity is regulated as follows. 3'-5' nuclease activity is stimulated in presence of pcna. In terms of biological role, functions as a weak apurinic/apyrimidinic (AP) endodeoxyribonuclease in the DNA base excision repair (BER) pathway of DNA lesions induced by oxidative and alkylating agents. Initiates repair of AP sites in DNA by catalyzing hydrolytic incision of the phosphodiester backbone immediately adjacent to the damage, generating a single-strand break with 5'-deoxyribose phosphate and 3'-hydroxyl ends. Exhibits 3'-5' exonuclease activity on a 3' DNA substrate; nuclease activity is stimulated by interaction with pcna. Has a preference for the 3' recessed ends over blunt-ended substrates, in both the presence and the absence of pcna. Generates single-stranded DNA (ssDNA) via 3'-5' single-strand break (SSB) end resection, thereby promoting a DNA damage response via replication protein A (rpa2)-binding to ssDNA and the recruitment of a checkpoint protein complex, including atr, atr-interacting protein atrip, and rad9, to damage sites following oxidative stress. Plays a role in reversing blocked 3' DNA ends, problematic lesions that preclude DNA synthesis. Required for chek1 phosphorylation induced by hydrogen peroxide but not by stalled replication forks. This chain is DNA-(apurinic or apyrimidinic site) endonuclease 2, found in Xenopus laevis (African clawed frog).